The following is a 199-amino-acid chain: Octanoyltransferase (199 aa).

Residues 27–199 (SNSYDELWLL…FVQYFLTQFK (173 aa)) form the BPL/LPL catalytic domain. Residues 66–73 (RGGQVTYH), 133–135 (SIG), and 146–148 (GIA) each bind substrate. Catalysis depends on Cys164, which acts as the Acyl-thioester intermediate.

The protein belongs to the LipB family.

Its subcellular location is the cytoplasm. The enzyme catalyses octanoyl-[ACP] + L-lysyl-[protein] = N(6)-octanoyl-L-lysyl-[protein] + holo-[ACP] + H(+). The protein operates within protein modification; protein lipoylation via endogenous pathway; protein N(6)-(lipoyl)lysine from octanoyl-[acyl-carrier-protein]: step 1/2. Its function is as follows. Catalyzes the transfer of endogenously produced octanoic acid from octanoyl-acyl-carrier-protein onto the lipoyl domains of lipoate-dependent enzymes. Lipoyl-ACP can also act as a substrate although octanoyl-ACP is likely to be the physiological substrate. The polypeptide is Octanoyltransferase (Legionella pneumophila (strain Lens)).